Consider the following 110-residue polypeptide: Large ribosomal subunit protein uL22 (110 aa).

Belongs to the universal ribosomal protein uL22 family. Part of the 50S ribosomal subunit.

This protein binds specifically to 23S rRNA; its binding is stimulated by other ribosomal proteins, e.g. L4, L17, and L20. It is important during the early stages of 50S assembly. It makes multiple contacts with different domains of the 23S rRNA in the assembled 50S subunit and ribosome. Functionally, the globular domain of the protein is located near the polypeptide exit tunnel on the outside of the subunit, while an extended beta-hairpin is found that lines the wall of the exit tunnel in the center of the 70S ribosome. The polypeptide is Large ribosomal subunit protein uL22 (Ruthia magnifica subsp. Calyptogena magnifica).